Here is a 29-residue protein sequence, read N- to C-terminus: Cliotide T18 (29 aa).

Residues 1-29 (GLPICGETCFTGTCYTPGCTCSYPVCKKN) constitute a cross-link (cyclopeptide (Gly-Asn)). 3 disulfide bridges follow: Cys-5–Cys-19, Cys-9–Cys-21, and Cys-14–Cys-26.

Post-translationally, contains 3 disulfide bonds. In terms of processing, this is a cyclic peptide. As to expression, expressed in root nodules but not in seed.

Probably participates in a plant defense mechanism. This chain is Cliotide T18, found in Clitoria ternatea (Butterfly pea).